A 381-amino-acid polypeptide reads, in one-letter code: Alkanesulfonate monooxygenase (381 aa).

This sequence belongs to the SsuD family. Homotetramer.

It catalyses the reaction an alkanesulfonate + FMNH2 + O2 = an aldehyde + FMN + sulfite + H2O + 2 H(+). In terms of biological role, catalyzes the desulfonation of aliphatic sulfonates. The protein is Alkanesulfonate monooxygenase of Escherichia coli O81 (strain ED1a).